A 134-amino-acid polypeptide reads, in one-letter code: ATP synthase epsilon chain (134 aa).

Belongs to the ATPase epsilon chain family. In terms of assembly, F-type ATPases have 2 components, CF(1) - the catalytic core - and CF(0) - the membrane proton channel. CF(1) has five subunits: alpha(3), beta(3), gamma(1), delta(1), epsilon(1). CF(0) has three main subunits: a, b and c.

It is found in the cell inner membrane. Functionally, produces ATP from ADP in the presence of a proton gradient across the membrane. This Sinorhizobium medicae (strain WSM419) (Ensifer medicae) protein is ATP synthase epsilon chain.